The primary structure comprises 178 residues: Large ribosomal subunit protein uL6 (178 aa).

Belongs to the universal ribosomal protein uL6 family. As to quaternary structure, part of the 50S ribosomal subunit.

Functionally, this protein binds to the 23S rRNA, and is important in its secondary structure. It is located near the subunit interface in the base of the L7/L12 stalk, and near the tRNA binding site of the peptidyltransferase center. The chain is Large ribosomal subunit protein uL6 from Thermoplasma acidophilum (strain ATCC 25905 / DSM 1728 / JCM 9062 / NBRC 15155 / AMRC-C165).